Here is a 347-residue protein sequence, read N- to C-terminus: 3-isopropylmalate dehydrogenase (347 aa).

Position 76–87 (glycine 76–glutamate 87) interacts with NAD(+). Arginine 94, arginine 104, arginine 132, and aspartate 217 together coordinate substrate. The Mg(2+) site is built by aspartate 217, aspartate 241, and aspartate 245. Residue glycine 275 to asparagine 287 participates in NAD(+) binding.

This sequence belongs to the isocitrate and isopropylmalate dehydrogenases family. LeuB type 1 subfamily. In terms of assembly, homodimer. It depends on Mg(2+) as a cofactor. Requires Mn(2+) as cofactor.

The protein localises to the cytoplasm. The catalysed reaction is (2R,3S)-3-isopropylmalate + NAD(+) = 4-methyl-2-oxopentanoate + CO2 + NADH. It participates in amino-acid biosynthesis; L-leucine biosynthesis; L-leucine from 3-methyl-2-oxobutanoate: step 3/4. Catalyzes the oxidation of 3-carboxy-2-hydroxy-4-methylpentanoate (3-isopropylmalate) to 3-carboxy-4-methyl-2-oxopentanoate. The product decarboxylates to 4-methyl-2 oxopentanoate. This Staphylococcus epidermidis (strain ATCC 35984 / DSM 28319 / BCRC 17069 / CCUG 31568 / BM 3577 / RP62A) protein is 3-isopropylmalate dehydrogenase.